The primary structure comprises 421 residues: 4-hydroxy-3-methylbut-2-en-1-yl diphosphate synthase (flavodoxin) (421 aa).

[4Fe-4S] cluster is bound by residues Cys298, Cys301, Cys344, and Glu351.

This sequence belongs to the IspG family. Requires [4Fe-4S] cluster as cofactor.

The enzyme catalyses (2E)-4-hydroxy-3-methylbut-2-enyl diphosphate + oxidized [flavodoxin] + H2O + 2 H(+) = 2-C-methyl-D-erythritol 2,4-cyclic diphosphate + reduced [flavodoxin]. It participates in isoprenoid biosynthesis; isopentenyl diphosphate biosynthesis via DXP pathway; isopentenyl diphosphate from 1-deoxy-D-xylulose 5-phosphate: step 5/6. Its function is as follows. Converts 2C-methyl-D-erythritol 2,4-cyclodiphosphate (ME-2,4cPP) into 1-hydroxy-2-methyl-2-(E)-butenyl 4-diphosphate. This is 4-hydroxy-3-methylbut-2-en-1-yl diphosphate synthase (flavodoxin) from Neisseria gonorrhoeae (strain ATCC 700825 / FA 1090).